Reading from the N-terminus, the 351-residue chain is Nicotinate-nucleotide--dimethylbenzimidazole phosphoribosyltransferase (351 aa).

Residue E317 is the Proton acceptor of the active site.

This sequence belongs to the CobT family.

It carries out the reaction 5,6-dimethylbenzimidazole + nicotinate beta-D-ribonucleotide = alpha-ribazole 5'-phosphate + nicotinate + H(+). The protein operates within nucleoside biosynthesis; alpha-ribazole biosynthesis; alpha-ribazole from 5,6-dimethylbenzimidazole: step 1/2. In terms of biological role, catalyzes the synthesis of alpha-ribazole-5'-phosphate from nicotinate mononucleotide (NAMN) and 5,6-dimethylbenzimidazole (DMB). The sequence is that of Nicotinate-nucleotide--dimethylbenzimidazole phosphoribosyltransferase from Pseudomonas fluorescens (strain SBW25).